We begin with the raw amino-acid sequence, 381 residues long: O-antigen chain mannosyltransferase B (381 aa).

This sequence belongs to the glycosyltransferase group 1 family. Glycosyltransferase 4 subfamily.

It carries out the reaction alpha-D-mannosyl-(1-&gt;3)-N-acetyl-alpha-D-glucosaminyl-di-trans,octa-cis-undecaprenyl diphosphate + 2 GDP-alpha-D-mannose = alpha-D-mannosyl-(1-&gt;3)-alpha-D-mannosyl-(1-&gt;3)-alpha-D-mannosyl-(1-&gt;3)-N-acetyl-alpha-D-glucosaminyl-di-trans,octa-cis-undecaprenyl diphosphate + 2 GDP + 2 H(+). Its pathway is bacterial outer membrane biogenesis; LPS O-antigen biosynthesis. In terms of biological role, mannosyltransferase involved in the biosynthesis of the repeat unit of the lipopolysaccharide (LPS) O-antigen region. Catalyzes the transfer of two alpha-(1-&gt;3)-linked mannose residues to the product of the WbdC enzyme during the synthesis of the adapter region. The chain is O-antigen chain mannosyltransferase B from Escherichia coli.